A 440-amino-acid chain; its full sequence is UDP-N-acetylmuramoylalanine--D-glutamate ligase (440 aa).

Position 113–119 (113–119 (GTNGKST)) interacts with ATP.

This sequence belongs to the MurCDEF family.

Its subcellular location is the cytoplasm. The enzyme catalyses UDP-N-acetyl-alpha-D-muramoyl-L-alanine + D-glutamate + ATP = UDP-N-acetyl-alpha-D-muramoyl-L-alanyl-D-glutamate + ADP + phosphate + H(+). The protein operates within cell wall biogenesis; peptidoglycan biosynthesis. Functionally, cell wall formation. Catalyzes the addition of glutamate to the nucleotide precursor UDP-N-acetylmuramoyl-L-alanine (UMA). The polypeptide is UDP-N-acetylmuramoylalanine--D-glutamate ligase (murD) (Buchnera aphidicola subsp. Acyrthosiphon pisum (strain APS) (Acyrthosiphon pisum symbiotic bacterium)).